The following is a 185-amino-acid chain: uncharacterized protein (185 aa).

The next 5 membrane-spanning stretches (helical) occupy residues 4–24 (TYLT…SLSI), 54–74 (LALF…LKLI), 98–118 (LRMG…LLQN), 119–139 (VIWI…FTVY), and 153–173 (FILL…FIFI).

Its subcellular location is the cell membrane. This is an uncharacterized protein from Bacillus subtilis (strain 168).